Here is an 83-residue protein sequence, read N- to C-terminus: Conotoxin VnMKLT1-022 (83 aa).

The signal sequence occupies residues 1–22 (MKLMCMMIVAVLFLTAWTFVTA). The propeptide occupies 23 to 55 (DDSINGPENRRIWEKLLSKTRDEMKNPEASKLN). Cystine bridges form between Cys-59–Cys-74, Cys-66–Cys-78, and Cys-73–Cys-82.

It belongs to the conotoxin O1 superfamily. Expressed by the venom duct.

It localises to the secreted. This is Conotoxin VnMKLT1-022 from Conus ventricosus (Mediterranean cone).